The sequence spans 359 residues: Histidinol-phosphate aminotransferase (359 aa).

Position 212 is an N6-(pyridoxal phosphate)lysine (Lys212).

It belongs to the class-II pyridoxal-phosphate-dependent aminotransferase family. Histidinol-phosphate aminotransferase subfamily. In terms of assembly, homodimer. It depends on pyridoxal 5'-phosphate as a cofactor.

It catalyses the reaction L-histidinol phosphate + 2-oxoglutarate = 3-(imidazol-4-yl)-2-oxopropyl phosphate + L-glutamate. The protein operates within amino-acid biosynthesis; L-histidine biosynthesis; L-histidine from 5-phospho-alpha-D-ribose 1-diphosphate: step 7/9. This chain is Histidinol-phosphate aminotransferase, found in Buchnera aphidicola subsp. Melaphis rhois.